The sequence spans 302 residues: Nucleotide-binding protein RHOS4_02640 (302 aa).

15–22 (GPSGAGRT) provides a ligand contact to ATP. 62–65 (DVRN) contributes to the GTP binding site.

Belongs to the RapZ-like family.

In terms of biological role, displays ATPase and GTPase activities. The chain is Nucleotide-binding protein RHOS4_02640 from Cereibacter sphaeroides (strain ATCC 17023 / DSM 158 / JCM 6121 / CCUG 31486 / LMG 2827 / NBRC 12203 / NCIMB 8253 / ATH 2.4.1.) (Rhodobacter sphaeroides).